The primary structure comprises 497 residues: Indoleacetaldoxime dehydratase (497 aa).

Residues 2 to 20 traverse the membrane as a helical segment; it reads EMILSISLCLTTLITLLLL. Cys-439 provides a ligand contact to heme.

This sequence belongs to the cytochrome P450 family.

It localises to the membrane. It catalyses the reaction (E)-(indol-3-yl)acetaldehyde oxime = (indol-3-yl)acetonitrile + H2O. Functionally, involved in the biosynthesis of the indole-derived phytoalexin camalexin. Catalyzes the conversion of indole-3-acetaldoxime to indole-3-acetonitrile. Required for resistance to A.brassicicola and B.cinerea. In Arabidopsis thaliana (Mouse-ear cress), this protein is Indoleacetaldoxime dehydratase (CYP71A13).